The following is a 140-amino-acid chain: Translation initiation factor 2 subunit beta (140 aa).

It belongs to the eIF-2-beta/eIF-5 family. Heterotrimer composed of an alpha, a beta and a gamma chain.

Functionally, eIF-2 functions in the early steps of protein synthesis by forming a ternary complex with GTP and initiator tRNA. This is Translation initiation factor 2 subunit beta (eif2b) from Pyrococcus abyssi (strain GE5 / Orsay).